The primary structure comprises 328 residues: Methionyl-tRNA formyltransferase (328 aa).

110-113 (SLLP) lines the (6S)-5,6,7,8-tetrahydrofolate pocket.

Belongs to the Fmt family.

The enzyme catalyses L-methionyl-tRNA(fMet) + (6R)-10-formyltetrahydrofolate = N-formyl-L-methionyl-tRNA(fMet) + (6S)-5,6,7,8-tetrahydrofolate + H(+). Attaches a formyl group to the free amino group of methionyl-tRNA(fMet). The formyl group appears to play a dual role in the initiator identity of N-formylmethionyl-tRNA by promoting its recognition by IF2 and preventing the misappropriation of this tRNA by the elongation apparatus. This chain is Methionyl-tRNA formyltransferase, found in Prochlorococcus marinus subsp. pastoris (strain CCMP1986 / NIES-2087 / MED4).